The chain runs to 450 residues: tRNA modification GTPase MnmE (450 aa).

3 residues coordinate (6S)-5-formyl-5,6,7,8-tetrahydrofolate: Arg25, Glu86, and Arg126. Positions 221 to 373 constitute a TrmE-type G domain; it reads GLRVALVGRP…LVQALLERCG (153 aa). Asn231 contacts K(+). GTP is bound by residues 231-236, 250-256, 275-278, and 336-339; these read NVGKSS, TDLPGTT, DTAG, and NKAD. Ser235 serves as a coordination point for Mg(2+). Thr250, Leu252, and Thr255 together coordinate K(+). Position 256 (Thr256) interacts with Mg(2+). A (6S)-5-formyl-5,6,7,8-tetrahydrofolate-binding site is contributed by Lys450.

Belongs to the TRAFAC class TrmE-Era-EngA-EngB-Septin-like GTPase superfamily. TrmE GTPase family. In terms of assembly, homodimer. Heterotetramer of two MnmE and two MnmG subunits. Requires K(+) as cofactor.

Its subcellular location is the cytoplasm. Exhibits a very high intrinsic GTPase hydrolysis rate. Involved in the addition of a carboxymethylaminomethyl (cmnm) group at the wobble position (U34) of certain tRNAs, forming tRNA-cmnm(5)s(2)U34. This is tRNA modification GTPase MnmE from Synechococcus sp. (strain CC9605).